The following is a 404-amino-acid chain: Cysteine desulfurase IscS (404 aa).

Pyridoxal 5'-phosphate is bound by residues 75–76 (AT), Asn-155, Gln-183, and 203–205 (SGH). Lys-206 is modified (N6-(pyridoxal phosphate)lysine). Residue Thr-243 coordinates pyridoxal 5'-phosphate. Cys-328 (cysteine persulfide intermediate) is an active-site residue. Cys-328 is a binding site for [2Fe-2S] cluster.

The protein belongs to the class-V pyridoxal-phosphate-dependent aminotransferase family. NifS/IscS subfamily. As to quaternary structure, homodimer. Forms a heterotetramer with IscU, interacts with other sulfur acceptors. Pyridoxal 5'-phosphate is required as a cofactor.

The protein resides in the cytoplasm. It catalyses the reaction (sulfur carrier)-H + L-cysteine = (sulfur carrier)-SH + L-alanine. It functions in the pathway cofactor biosynthesis; iron-sulfur cluster biosynthesis. Master enzyme that delivers sulfur to a number of partners involved in Fe-S cluster assembly, tRNA modification or cofactor biosynthesis. Catalyzes the removal of elemental sulfur atoms from cysteine to produce alanine. Functions as a sulfur delivery protein for Fe-S cluster synthesis onto IscU, an Fe-S scaffold assembly protein, as well as other S acceptor proteins. The protein is Cysteine desulfurase IscS of Shewanella frigidimarina (strain NCIMB 400).